We begin with the raw amino-acid sequence, 141 residues long: Large-conductance mechanosensitive channel (141 aa).

The next 2 helical transmembrane spans lie at V21–I41 and G85–V105.

This sequence belongs to the MscL family. In terms of assembly, homopentamer.

It localises to the cell inner membrane. Its function is as follows. Channel that opens in response to stretch forces in the membrane lipid bilayer. May participate in the regulation of osmotic pressure changes within the cell. The polypeptide is Large-conductance mechanosensitive channel (Dechloromonas aromatica (strain RCB)).